The following is a 344-amino-acid chain: L-rhamnose-proton symporter (344 aa).

Transmembrane regions (helical) follow at residues 4-24 (AITMGIFWHLIGAASAACFYA), 38-58 (WSVGGIVSWLILPWTISALLL), 68-88 (FNLSTLLPVFLFGAMWGIGNI), 101-121 (MGIGIAIGITLIVGTLMTPII), 131-151 (TEGGHMTLLGVFVALIGVGIV), 175-195 (LLLAVMCGIFSAGMSFAMNAA), 214-234 (LPSYVVIMGGGALVNLGFCFI), 259-279 (ILLSALGGLMWYLQFFFYAWG), 290-310 (MSWMLHMSFYVLCGGLVGLVL), and 321-341 (VAVLSLGCVVIIIAANIVGLG).

Belongs to the L-rhamnose transporter (TC 2.A.7.6) family.

It localises to the cell inner membrane. The catalysed reaction is L-rhamnopyranose(in) + H(+)(in) = L-rhamnopyranose(out) + H(+)(out). Its function is as follows. Uptake of L-rhamnose across the cytoplasmic membrane with the concomitant transport of protons into the cell (symport system). In Salmonella typhi, this protein is L-rhamnose-proton symporter.